The sequence spans 492 residues: Steroid 21-hydroxylase (492 aa).

Positions 91 and 120 each coordinate heme b. Arg-231 is a binding site for 17alpha-hydroxyprogesterone. Residue Arg-231 participates in progesterone binding. The heme b site is built by His-363, Arg-424, and Cys-426.

The protein belongs to the cytochrome P450 family. It depends on heme b as a cofactor.

The protein localises to the endoplasmic reticulum membrane. It is found in the microsome membrane. It carries out the reaction 17alpha-hydroxyprogesterone + reduced [NADPH--hemoprotein reductase] + O2 = 11-deoxycortisol + oxidized [NADPH--hemoprotein reductase] + H2O + H(+). The enzyme catalyses progesterone + reduced [NADPH--hemoprotein reductase] + O2 = 21-hydroxyprogesterone + oxidized [NADPH--hemoprotein reductase] + H2O + H(+). Its function is as follows. Specifically catalyzes the 21-hydroxylation of steroids. Required for the adrenal synthesis of mineralocorticoids and glucocorticoids. This is Steroid 21-hydroxylase (CYP21) from Lynx lynx (Eurasian lynx).